A 396-amino-acid polypeptide reads, in one-letter code: S-adenosylmethionine synthase (396 aa).

Residue His16 participates in ATP binding. Asp18 is a binding site for Mg(2+). Glu44 lines the K(+) pocket. L-methionine-binding residues include Glu57 and Gln100. Residues Gln100–Arg110 form a flexible loop region. Residues Asp165 to Lys167, Asp240, Arg246 to Lys247, Ala263, and Lys267 contribute to the ATP site. Asp240 provides a ligand contact to L-methionine. Lys271 contacts L-methionine.

The protein belongs to the AdoMet synthase family. In terms of assembly, homotetramer; dimer of dimers. Mg(2+) serves as cofactor. The cofactor is K(+).

The protein resides in the cytoplasm. The catalysed reaction is L-methionine + ATP + H2O = S-adenosyl-L-methionine + phosphate + diphosphate. It functions in the pathway amino-acid biosynthesis; S-adenosyl-L-methionine biosynthesis; S-adenosyl-L-methionine from L-methionine: step 1/1. Functionally, catalyzes the formation of S-adenosylmethionine (AdoMet) from methionine and ATP. The overall synthetic reaction is composed of two sequential steps, AdoMet formation and the subsequent tripolyphosphate hydrolysis which occurs prior to release of AdoMet from the enzyme. This is S-adenosylmethionine synthase from Stutzerimonas stutzeri (strain A1501) (Pseudomonas stutzeri).